The following is a 174-amino-acid chain: Cell division protein FtsL (174 aa).

Residues 1–38 are Cytoplasmic-facing; the sequence is MLAAPRELSYIPQPVVSSKQSPRSGLSNRRRESRARQK. Residues 39–59 form a helical membrane-spanning segment; it reads ILLLGLVLMGFVIGLSLTFLT. At 60–174 the chain is on the extracellular side; that stretch reads MQVLIKGYKI…EPARQAGAGV (115 aa).

It belongs to the FtsL family.

It localises to the cell membrane. Its function is as follows. Essential cell division protein. This Moorella thermoacetica (strain ATCC 39073 / JCM 9320) protein is Cell division protein FtsL.